The sequence spans 360 residues: Histidinol-phosphate aminotransferase (360 aa).

Lysine 222 carries the post-translational modification N6-(pyridoxal phosphate)lysine.

The protein belongs to the class-II pyridoxal-phosphate-dependent aminotransferase family. Histidinol-phosphate aminotransferase subfamily. Homodimer. Pyridoxal 5'-phosphate is required as a cofactor.

The enzyme catalyses L-histidinol phosphate + 2-oxoglutarate = 3-(imidazol-4-yl)-2-oxopropyl phosphate + L-glutamate. It participates in amino-acid biosynthesis; L-histidine biosynthesis; L-histidine from 5-phospho-alpha-D-ribose 1-diphosphate: step 7/9. This chain is Histidinol-phosphate aminotransferase, found in Listeria monocytogenes serotype 4b (strain F2365).